A 502-amino-acid polypeptide reads, in one-letter code: Ribose import ATP-binding protein RbsA (502 aa).

ABC transporter domains lie at Val3–Glu239 and Ala249–Ala493. Residue Gly35–Ser42 coordinates ATP.

Belongs to the ABC transporter superfamily. Ribose importer (TC 3.A.1.2.1) family. The complex is composed of an ATP-binding protein (RbsA), two transmembrane proteins (RbsC) and a solute-binding protein (RbsB).

It localises to the cell inner membrane. It carries out the reaction D-ribose(out) + ATP + H2O = D-ribose(in) + ADP + phosphate + H(+). Functionally, part of the ABC transporter complex RbsABC involved in ribose import. Responsible for energy coupling to the transport system. This Chromobacterium violaceum (strain ATCC 12472 / DSM 30191 / JCM 1249 / CCUG 213 / NBRC 12614 / NCIMB 9131 / NCTC 9757 / MK) protein is Ribose import ATP-binding protein RbsA.